Reading from the N-terminus, the 198-residue chain is Ribonuclease HII (198 aa).

The region spanning 10–198 is the RNase H type-2 domain; the sequence is QLVAGVDEVG…PVKRALGLAS (189 aa). A divalent metal cation is bound by residues Asp-16, Glu-17, and Asp-108.

Belongs to the RNase HII family. Mn(2+) is required as a cofactor. The cofactor is Mg(2+).

The protein localises to the cytoplasm. It carries out the reaction Endonucleolytic cleavage to 5'-phosphomonoester.. Its function is as follows. Endonuclease that specifically degrades the RNA of RNA-DNA hybrids. In Shigella boydii serotype 4 (strain Sb227), this protein is Ribonuclease HII.